Reading from the N-terminus, the 143-residue chain is Insertion element IS2 uncharacterized 16.4 kDa protein (143 aa).

This is Insertion element IS2 uncharacterized 16.4 kDa protein from Escherichia coli.